Consider the following 115-residue polypeptide: Large ribosomal subunit protein bL35m (115 aa).

The protein belongs to the bacterial ribosomal protein bL35 family.

Its subcellular location is the mitochondrion. The protein is Large ribosomal subunit protein bL35m of Saccharomyces cerevisiae (strain YJM789) (Baker's yeast).